Consider the following 595-residue polypeptide: TNF receptor-associated factor family protein DDB_G0272348 (595 aa).

Residues 14 to 64 (SFTNNNSNNNNNNNNNSNSNNNNNNNNNNINNNNNHNNNNKNNSNNKNEIN) are disordered. Low complexity predominate over residues 17–64 (NNNSNNNNNNNNNSNSNNNNNNNNNNINNNNNHNNNNKNNSNNKNEIN). The RING-type; degenerate zinc finger occupies 87–134 (CTICSDLLVNSFHADKFKAVQCKNGHYTTCLNCWEKHLEKKKNCIQCG). 2 consecutive TRAF-type zinc fingers follow at residues 189–253 (EHLK…INKE) and 254–311 (SHNA…SKLS). A coiled-coil region spans residues 348–410 (LLNGQNKKIT…QQQQSQQQQQ (63 aa)). Residues 409–440 (QQSQQQQQSQQSQQNNNSNSHFINNNNNNINN) show a composition bias toward low complexity. The tract at residues 409 to 450 (QQSQQQQQSQQSQQNNNSNSHFINNNNNNINNVQMSDSPNGG) is disordered. Positions 441-450 (VQMSDSPNGG) are enriched in polar residues. An MATH domain is found at 456 to 584 (VYKNKWVISN…NDSITIEIEI (129 aa)).

The protein belongs to the TNF receptor-associated factor family. A subfamily.

Its subcellular location is the cytoplasm. Functionally, probable adapter protein and signal transducer that links members of the tumor necrosis factor receptor family to different signaling pathways by association with the receptor cytoplasmic domain and kinases. The sequence is that of TNF receptor-associated factor family protein DDB_G0272348 from Dictyostelium discoideum (Social amoeba).